A 1088-amino-acid polypeptide reads, in one-letter code: RNA-directed RNA polymerase (1088 aa).

A RdRp catalytic domain is found at 501-687; it reads LSYGDVTRFL…AKRYIAGGKI (187 aa).

It belongs to the reoviridae RNA-directed RNA polymerase family. In terms of assembly, interacts with VP3 (Potential). Interacts with VP2; this interaction activates VP1. Interacts with NSP5; this interaction is probably necessary for the formation of functional virus factories. Interacts with NSP2; this interaction is weak. Mg(2+) serves as cofactor.

It is found in the virion. It carries out the reaction RNA(n) + a ribonucleoside 5'-triphosphate = RNA(n+1) + diphosphate. Functionally, RNA-directed RNA polymerase that is involved in both transcription and genome replication. Together with VP3 capping enzyme, forms an enzyme complex positioned near the channels situated at each of the five-fold vertices of the core. Following infection, the outermost layer of the virus is lost, leaving a double-layered particle (DLP) made up of the core and VP6 shell. VP1 then catalyzes the transcription of fully conservative plus-strand genomic RNAs that are extruded through the DLP's channels into the cytoplasm where they function as mRNAs for translation of viral proteins. One copy of each of the viral (+)RNAs is also recruited during core assembly, together with newly synthesized polymerase complexes and VP2. The polymerase of these novo-formed particles catalyzes the synthesis of complementary minus-strands leading to dsRNA formation. To do so, the polymerase specifically recognizes and binds 4 bases 5'-UGUG-3' in the conserved 3'-sequence of plus-strand RNA templates. VP2 presumably activates the autoinhibited VP1-RNA complex to coordinate packaging and genome replication. Once dsRNA synthesis is complete, the polymerase switches to the transcriptional mode, thus providing secondary transcription. This chain is RNA-directed RNA polymerase, found in Homo sapiens (Human).